The primary structure comprises 165 residues: Endoribonuclease YbeY (165 aa).

Residues His-130, His-134, and His-140 each coordinate Zn(2+).

This sequence belongs to the endoribonuclease YbeY family. It depends on Zn(2+) as a cofactor.

It localises to the cytoplasm. In terms of biological role, single strand-specific metallo-endoribonuclease involved in late-stage 70S ribosome quality control and in maturation of the 3' terminus of the 16S rRNA. The protein is Endoribonuclease YbeY of Streptococcus pyogenes serotype M28 (strain MGAS6180).